A 103-amino-acid chain; its full sequence is Small ribosomal subunit protein bS18 (103 aa).

A compositionally biased stretch (basic and acidic residues) spans 1 to 19 (MSEERTERPERTERPERPQ). A disordered region spans residues 1–33 (MSEERTERPERTERPERPQQRGSGPRKRRPFQR). Basic residues predominate over residues 24–33 (GPRKRRPFQR).

It belongs to the bacterial ribosomal protein bS18 family. In terms of assembly, part of the 30S ribosomal subunit. Forms a tight heterodimer with protein bS6.

In terms of biological role, binds as a heterodimer with protein bS6 to the central domain of the 16S rRNA, where it helps stabilize the platform of the 30S subunit. In Geobacter sulfurreducens (strain ATCC 51573 / DSM 12127 / PCA), this protein is Small ribosomal subunit protein bS18.